The primary structure comprises 289 residues: 33 kDa chaperonin (289 aa).

Intrachain disulfides connect Cys-237–Cys-239 and Cys-270–Cys-273.

Belongs to the HSP33 family. In terms of processing, under oxidizing conditions two disulfide bonds are formed involving the reactive cysteines. Under reducing conditions zinc is bound to the reactive cysteines and the protein is inactive.

It is found in the cytoplasm. Its function is as follows. Redox regulated molecular chaperone. Protects both thermally unfolding and oxidatively damaged proteins from irreversible aggregation. Plays an important role in the bacterial defense system toward oxidative stress. The sequence is that of 33 kDa chaperonin from Oceanobacillus iheyensis (strain DSM 14371 / CIP 107618 / JCM 11309 / KCTC 3954 / HTE831).